Here is a 372-residue protein sequence, read N- to C-terminus: Adaptive-response sensory kinase SasA (372 aa).

The region spanning 147 to 360 (MVAHELRTPL…CFHFTVPVWQ (214 aa)) is the Histidine kinase domain. H150 bears the Phosphohistidine; by autocatalysis mark.

In terms of assembly, homooligomerizes. Interacts with KaiC. Participates in the KaiBC complex, whose core is composed of a KaiC homohexamer and 6 KaiB.

It carries out the reaction ATP + protein L-histidine = ADP + protein N-phospho-L-histidine.. In terms of biological role, member of the two-component regulatory system SasA/RpaA involved in genome-wide circadian gene expression. One of several clock output pathways. Participates in the Kai clock protein complex, the main circadian regulator in cyanobacteria, via its interaction with KaiC. KaiC enhances the autophosphorylation activity of SasA, which then transfers its phosphate group to RpaA to activate it. In addition to its output function, recruits fold-shifted KaiB (KaiB(fs)) to KaiC to cooperatively form the KaiB(6):KaiC(6) complex (independent of SasA kinase activity). Required for robustness of the circadian rhythm of gene expression and is involved in clock output, also required for adaptation to light/dark cycles. This is Adaptive-response sensory kinase SasA from Prochlorococcus marinus (strain AS9601).